Here is a 213-residue protein sequence, read N- to C-terminus: 5''-phosphoribostamycin phosphatase (213 aa).

Catalysis depends on His-8, which acts as the Tele-phosphohistidine intermediate. The active site involves His-155.

This sequence belongs to the histidine phosphatase superfamily.

The catalysed reaction is 5''-phosphoribostamycin + H2O = ribostamycin + phosphate. Its pathway is antibiotic biosynthesis; butirosin biosynthesis. In terms of biological role, catalyzes dephosphorylation of 5''-phosphoribostamycin to generate ribostamycinin the biosynthetic pathway of butirosin. The polypeptide is 5''-phosphoribostamycin phosphatase (btrP) (Niallia circulans (Bacillus circulans)).